The primary structure comprises 197 residues: Xanthine phosphoribosyltransferase (197 aa).

The xanthine site is built by leucine 20 and asparagine 27. A 5-phospho-alpha-D-ribose 1-diphosphate-binding site is contributed by 128–132; that stretch reads ANGQA. Residue lysine 156 coordinates xanthine.

It belongs to the purine/pyrimidine phosphoribosyltransferase family. Xpt subfamily. As to quaternary structure, homodimer.

The protein localises to the cytoplasm. The catalysed reaction is XMP + diphosphate = xanthine + 5-phospho-alpha-D-ribose 1-diphosphate. It participates in purine metabolism; XMP biosynthesis via salvage pathway; XMP from xanthine: step 1/1. Its function is as follows. Converts the preformed base xanthine, a product of nucleic acid breakdown, to xanthosine 5'-monophosphate (XMP), so it can be reused for RNA or DNA synthesis. This chain is Xanthine phosphoribosyltransferase, found in Bacillus cereus (strain B4264).